The chain runs to 399 residues: NADH-quinone oxidoreductase subunit D 2 (399 aa).

A disordered region spans residues 1-20 (MIASKESNSAATPATSAPTL). The segment covering 9–20 (SAATPATSAPTL) has biased composition (low complexity).

The protein belongs to the complex I 49 kDa subunit family. NDH-1 is composed of 14 different subunits. Subunits NuoB, C, D, E, F, and G constitute the peripheral sector of the complex.

The protein localises to the cell inner membrane. The enzyme catalyses a quinone + NADH + 5 H(+)(in) = a quinol + NAD(+) + 4 H(+)(out). Functionally, NDH-1 shuttles electrons from NADH, via FMN and iron-sulfur (Fe-S) centers, to quinones in the respiratory chain. The immediate electron acceptor for the enzyme in this species is believed to be ubiquinone. Couples the redox reaction to proton translocation (for every two electrons transferred, four hydrogen ions are translocated across the cytoplasmic membrane), and thus conserves the redox energy in a proton gradient. The sequence is that of NADH-quinone oxidoreductase subunit D 2 from Opitutus terrae (strain DSM 11246 / JCM 15787 / PB90-1).